Here is a 329-residue protein sequence, read N- to C-terminus: Vitamin B12 import system permease protein BtuC (329 aa).

9 helical membrane passes run 22-42 (LSVLMLLAVVLSLCAGDQWIA), 64-84 (LAVLLVGAALALSGAVMQALF), 91-111 (PGLLGVSNGAGVGLIAAVLLG), 115-135 (LPGWALGFCAIAGALIITLIL), 149-169 (LLAGVALGIICSAMMTWAIYF), 187-207 (GGVDWQQAWLMIALIPVSLWI), 243-263 (GWMVGVSVALAGSIGFIGLVI), 277-297 (ALLPGCALAGAIALLLADVIA), and 305-325 (ELPIGVVTATMGAPVFIWLLL).

This sequence belongs to the binding-protein-dependent transport system permease family. FecCD subfamily. As to quaternary structure, the complex is composed of two ATP-binding proteins (BtuD), two transmembrane proteins (BtuC) and a solute-binding protein (BtuF).

It is found in the cell inner membrane. Its function is as follows. Part of the ABC transporter complex BtuCDF involved in vitamin B12 import. Involved in the translocation of the substrate across the membrane. This Citrobacter koseri (strain ATCC BAA-895 / CDC 4225-83 / SGSC4696) protein is Vitamin B12 import system permease protein BtuC.